The sequence spans 307 residues: Ras-related protein RabR (307 aa).

Residues 1-10 (MTTTTLLSES) show a composition bias toward polar residues. A disordered region spans residues 1 to 45 (MTTTTLLSESTNNSNNTNNNTNNNTNNTMNNNNNNNNNNTIGNNN). Residues 11–45 (TNNSNNTNNNTNNNTNNTMNNNNNNNNNNTIGNNN) show a composition bias toward low complexity. Residue 61–68 (GDEEVGKG) coordinates GTP. The Effector region motif lies at 83–92 (ENLYNIEVDR). 122–126 (NFHMH) serves as a coordination point for GTP. Residues 175–185 (NFNCQSNSRNS) show a composition bias toward low complexity. Residues 175 to 223 (NFNCQSNSRNSTNYNRHSVGNHCPNSPQKGEKENNTHSSTAPPAPPPLP) are disordered. The span at 186 to 202 (TNYNRHSVGNHCPNSPQ) shows a compositional bias: polar residues. A GTP-binding site is contributed by 230–233 (NKCD). The residue at position 304 (Cys304) is a Cysteine methyl ester. Cys304 is lipidated: S-geranylgeranyl cysteine. Residues 305–307 (NLM) constitute a propeptide, removed in mature form.

Belongs to the small GTPase superfamily. Rab family.

It localises to the cell membrane. This Dictyostelium discoideum (Social amoeba) protein is Ras-related protein RabR (rabR).